A 186-amino-acid chain; its full sequence is Casparian strip membrane protein 5 (186 aa).

Residues 1-23 (MEHGEISSKAPLVAPVAAGVNRA) lie on the Cytoplasmic side of the membrane. A helical membrane pass occupies residues 24-44 (VAVVDTFLRFIAIIGTIGSAI). Residues 45 to 73 (AMGTTNETLPFFTQFIQFEAKYSDLPSFT) are Extracellular-facing. N-linked (GlcNAc...) asparagine glycosylation is present at asparagine 50. The helical transmembrane segment at 74-94 (FFVAANAVVCTYLVLSIPLSI) threads the bilayer. At 95–106 (VHILRPRARYSR) the chain is on the cytoplasmic side. Residues 107-127 (LFLVFFDTAMLALLTAGASAA) traverse the membrane as a helical segment. Residues 128 to 160 (AAIVYLAHKGNVRANWFSICQQFDSFCERISGS) are Extracellular-facing. The helical transmembrane segment at 161 to 181 (LIGSFAAMVLLVVLITLSAFA) threads the bilayer. Topologically, residues 182–186 (LARRH) are cytoplasmic.

The protein belongs to the Casparian strip membrane proteins (CASP) family. Homodimer and heterodimers.

The protein resides in the cell membrane. Functionally, regulates membrane-cell wall junctions and localized cell wall deposition. Required for establishment of the Casparian strip membrane domain (CSD) and the subsequent formation of Casparian strips, a cell wall modification of the root endodermis that determines an apoplastic barrier between the intraorganismal apoplasm and the extraorganismal apoplasm and prevents lateral diffusion. The protein is Casparian strip membrane protein 5 of Oryza sativa subsp. japonica (Rice).